A 242-amino-acid polypeptide reads, in one-letter code: Biosynthetic peptidoglycan transglycosylase (242 aa).

A helical transmembrane segment spans residues 19–39 (LMVVLAVFWGGGIALFSVAPV).

The protein belongs to the glycosyltransferase 51 family.

The protein localises to the cell inner membrane. It catalyses the reaction [GlcNAc-(1-&gt;4)-Mur2Ac(oyl-L-Ala-gamma-D-Glu-L-Lys-D-Ala-D-Ala)](n)-di-trans,octa-cis-undecaprenyl diphosphate + beta-D-GlcNAc-(1-&gt;4)-Mur2Ac(oyl-L-Ala-gamma-D-Glu-L-Lys-D-Ala-D-Ala)-di-trans,octa-cis-undecaprenyl diphosphate = [GlcNAc-(1-&gt;4)-Mur2Ac(oyl-L-Ala-gamma-D-Glu-L-Lys-D-Ala-D-Ala)](n+1)-di-trans,octa-cis-undecaprenyl diphosphate + di-trans,octa-cis-undecaprenyl diphosphate + H(+). It participates in cell wall biogenesis; peptidoglycan biosynthesis. Functionally, peptidoglycan polymerase that catalyzes glycan chain elongation from lipid-linked precursors. The sequence is that of Biosynthetic peptidoglycan transglycosylase from Escherichia coli O139:H28 (strain E24377A / ETEC).